The following is a 1224-amino-acid chain: DNA-directed RNA polymerase subunit beta (1224 aa).

This sequence belongs to the RNA polymerase beta chain family. The RNAP catalytic core consists of 2 alpha, 1 beta, 1 beta' and 1 omega subunit. When a sigma factor is associated with the core the holoenzyme is formed, which can initiate transcription.

The enzyme catalyses RNA(n) + a ribonucleoside 5'-triphosphate = RNA(n+1) + diphosphate. DNA-dependent RNA polymerase catalyzes the transcription of DNA into RNA using the four ribonucleoside triphosphates as substrates. The sequence is that of DNA-directed RNA polymerase subunit beta from Pelotomaculum thermopropionicum (strain DSM 13744 / JCM 10971 / SI).